We begin with the raw amino-acid sequence, 216 residues long: Adenylate kinase (216 aa).

An ATP-binding site is contributed by 10-15 (GAGKGT). Residues 30–59 (STGDMLRAAVSAQTEVGKRAKAVMDAGKLV) are NMP. AMP-binding positions include threonine 31, arginine 36, 57–59 (KLV), 85–88 (GFPR), and glutamine 92. The LID stretch occupies residues 126–163 (GRYTCANCGTGYHDENLKPKVEGVCDKCGSTHFKRRPD). Arginine 127 contacts ATP. Zn(2+) contacts are provided by cysteine 130, cysteine 133, cysteine 150, and cysteine 153. 2 residues coordinate AMP: arginine 160 and arginine 172. Alanine 200 contributes to the ATP binding site.

This sequence belongs to the adenylate kinase family. Monomer.

The protein resides in the cytoplasm. The enzyme catalyses AMP + ATP = 2 ADP. Its pathway is purine metabolism; AMP biosynthesis via salvage pathway; AMP from ADP: step 1/1. Its function is as follows. Catalyzes the reversible transfer of the terminal phosphate group between ATP and AMP. Plays an important role in cellular energy homeostasis and in adenine nucleotide metabolism. The polypeptide is Adenylate kinase (Allorhizobium ampelinum (strain ATCC BAA-846 / DSM 112012 / S4) (Agrobacterium vitis (strain S4))).